The primary structure comprises 349 residues: tRNA pseudouridine synthase D (349 aa).

A substrate-binding site is contributed by phenylalanine 27. Residue aspartate 80 is the Nucleophile of the active site. Asparagine 129 serves as a coordination point for substrate. Residues 155–303 (GVPNYFGAQR…VEAARRAMLL (149 aa)) form the TRUD domain. Phenylalanine 329 provides a ligand contact to substrate.

Belongs to the pseudouridine synthase TruD family.

It carries out the reaction uridine(13) in tRNA = pseudouridine(13) in tRNA. Functionally, responsible for synthesis of pseudouridine from uracil-13 in transfer RNAs. This chain is tRNA pseudouridine synthase D, found in Klebsiella pneumoniae subsp. pneumoniae (strain ATCC 700721 / MGH 78578).